Consider the following 1193-residue polypeptide: Structural maintenance of chromosomes protein 3 homolog (1193 aa).

Residue 31 to 38 (GFNGSGKS) coordinates ATP. Position 101 is an N6-acetyllysine (Lys-101). Coiled-coil stretches lie at residues 179 to 286 (SKKV…LNKT) and 332 to 483 (ILRV…EIIK). The region spanning 505–631 (ENILGFLIDN…VKSLESCENY (127 aa)) is the SMC hinge domain. A coiled-coil region spans residues 665–993 (TVYNKLKELK…SHKNIKDMIQ (329 aa)).

This sequence belongs to the SMC family. SMC3 subfamily. Component of the cohesin complex. Acetylation at Lys-101 by ESCO1 is important for genome stability and S phase sister chromatid cohesion.

The protein localises to the nucleus. Its function is as follows. Central component of cohesin, a complex required for chromosome cohesion during the cell cycle. The cohesin complex may form a large proteinaceous ring within which sister chromatids can be trapped. At anaphase, the complex is cleaved and dissociates from chromatin, allowing sister chromatids to segregate. Cohesion is coupled to DNA replication and is involved in DNA repair. The cohesin complex also plays an important role in spindle pole assembly during mitosis and in chromosomes movement. The chain is Structural maintenance of chromosomes protein 3 homolog from Plasmodium falciparum (isolate 3D7).